Here is a 122-residue protein sequence, read N- to C-terminus: Phospholipase A2 homolog ECS_00014 (122 aa).

7 disulfide bridges follow: Cys26-Cys115, Cys28-Cys44, Cys43-Cys95, Cys49-Cys122, Cys50-Cys88, Cys57-Cys81, and Cys75-Cys86. The segment at 105–117 (KKYTYYPNFWCKG) is important for membrane-damaging activities in eukaryotes and bacteria; heparin-binding.

The protein belongs to the phospholipase A2 family. Group II subfamily. S49 sub-subfamily. Monomer. Expressed by the venom gland.

It is found in the secreted. Functionally, snake venom phospholipase A2 homolog that lacks enzymatic activity. Shows high myotoxin activities and displays edema-inducing activities. Has cytotoxic activities against HUVEC cells (LC(50)=12.2 uL) and human lung adenocarcinoma A549 cells (LC(50)=8.5 uL). In Echis carinatus sochureki (Saw-scaled viper), this protein is Phospholipase A2 homolog ECS_00014.